The chain runs to 245 residues: tRNA1(Val) (adenine(37)-N6)-methyltransferase (245 aa).

Belongs to the methyltransferase superfamily. tRNA (adenine-N(6)-)-methyltransferase family.

The protein localises to the cytoplasm. The catalysed reaction is adenosine(37) in tRNA1(Val) + S-adenosyl-L-methionine = N(6)-methyladenosine(37) in tRNA1(Val) + S-adenosyl-L-homocysteine + H(+). Functionally, specifically methylates the adenine in position 37 of tRNA(1)(Val) (anticodon cmo5UAC). This is tRNA1(Val) (adenine(37)-N6)-methyltransferase from Klebsiella pneumoniae (strain 342).